The sequence spans 425 residues: Monoacylglycerol lipase ABHD2 (425 aa).

The Cytoplasmic segment spans residues 1–9 (MNAMLETPE). A helical; Signal-anchor for type II membrane protein membrane pass occupies residues 10–30 (LPAVFDGVKLAAVAAVLYVIV). The Extracellular segment spans residues 31-425 (RCLNLKSPTA…DTEQVEADLE (395 aa)). The 255-residue stretch at 128-382 (MVICPGIANH…HGGHLGFFEG (255 aa)) folds into the AB hydrolase-1 domain. A glycan (N-linked (GlcNAc...) asparagine) is linked at asparagine 136. Residue serine 207 is the Nucleophile of the active site. Active-site charge relay system residues include aspartate 345 and histidine 376. Asparagine 410 carries N-linked (GlcNAc...) asparagine glycosylation.

This sequence belongs to the AB hydrolase superfamily. AB hydrolase 4 family.

Its subcellular location is the cell membrane. It catalyses the reaction Hydrolyzes glycerol monoesters of long-chain fatty acids.. It carries out the reaction an acetyl ester + H2O = an aliphatic alcohol + acetate + H(+). The catalysed reaction is a triacylglycerol + H2O = a diacylglycerol + a fatty acid + H(+). The enzyme catalyses 2-(5Z,8Z,11Z,14Z-eicosatetraenoyl)-glycerol + H2O = glycerol + (5Z,8Z,11Z,14Z)-eicosatetraenoate + H(+). It catalyses the reaction a butanoate ester + H2O = an aliphatic alcohol + butanoate + H(+). It carries out the reaction hexadecanoate ester + H2O = an aliphatic alcohol + hexadecanoate + H(+). Acylglycerol lipase activity is activated upon binding to progesterone. Its function is as follows. Progesterone-dependent acylglycerol lipase that catalyzes hydrolysis of endocannabinoid arachidonoylglycerol (AG) from cell membrane. Acts as a progesterone receptor: progesterone-binding activates the acylglycerol lipase activity, mediating degradation of 1-arachidonoylglycerol (1AG) and 2-arachidonoylglycerol (2AG) to glycerol and arachidonic acid (AA). Also displays an ester hydrolase activity against acetyl ester, butanoate ester and hexadecanoate ester. Plays a key role in sperm capacitation in response to progesterone by mediating degradation of 2AG, an inhibitor of the sperm calcium channel CatSper, leading to calcium influx via CatSper and sperm activation. May also play a role in smooth muscle cells migration. This is Monoacylglycerol lipase ABHD2 (ABHD2) from Macaca fascicularis (Crab-eating macaque).